Reading from the N-terminus, the 314-residue chain is Porphobilinogen deaminase (314 aa).

The residue at position 242 (Cys-242) is an S-(dipyrrolylmethanemethyl)cysteine.

Belongs to the HMBS family. In terms of assembly, monomer. Dipyrromethane is required as a cofactor.

It catalyses the reaction 4 porphobilinogen + H2O = hydroxymethylbilane + 4 NH4(+). It participates in porphyrin-containing compound metabolism; protoporphyrin-IX biosynthesis; coproporphyrinogen-III from 5-aminolevulinate: step 2/4. Functionally, tetrapolymerization of the monopyrrole PBG into the hydroxymethylbilane pre-uroporphyrinogen in several discrete steps. This is Porphobilinogen deaminase (hemC) from Bacillus subtilis (strain 168).